A 496-amino-acid chain; its full sequence is Cytochrome f, chloroplastic (496 aa).

A chloroplast-targeting transit peptide spans 1–149 (MASLQTPVMV…VGAAAGSANA (149 aa)). 4 residues coordinate heme: Tyr150, Cys170, Cys173, and His174. The chain crosses the membrane as a helical span at residues 462–481 (VQAFLFFSFTVLATQTLLVV).

The protein belongs to the cytochrome f family. Interacts with plastocyanin and Rieske iron-sulfur protein. It depends on heme as a cofactor.

Its subcellular location is the plastid. It is found in the chloroplast thylakoid membrane. Its function is as follows. Translocates protons across the thylakoid membrane and transfers electrons from photosystem II to photosystem I. It receives electrons from the Rieske iron-sulfur protein and passes them to plastocyanin. The sequence is that of Cytochrome f, chloroplastic (petA) from Euglena gracilis.